The following is a 238-amino-acid chain: Deoxyribose-phosphate aldolase (238 aa).

The active-site Proton donor/acceptor is D104. The Schiff-base intermediate with acetaldehyde role is filled by K168. The Proton donor/acceptor role is filled by K197.

The protein belongs to the DeoC/FbaB aldolase family. DeoC type 1 subfamily.

The protein resides in the cytoplasm. The enzyme catalyses 2-deoxy-D-ribose 5-phosphate = D-glyceraldehyde 3-phosphate + acetaldehyde. It functions in the pathway carbohydrate degradation; 2-deoxy-D-ribose 1-phosphate degradation; D-glyceraldehyde 3-phosphate and acetaldehyde from 2-deoxy-alpha-D-ribose 1-phosphate: step 2/2. Functionally, catalyzes a reversible aldol reaction between acetaldehyde and D-glyceraldehyde 3-phosphate to generate 2-deoxy-D-ribose 5-phosphate. This is Deoxyribose-phosphate aldolase from Bacteroides thetaiotaomicron (strain ATCC 29148 / DSM 2079 / JCM 5827 / CCUG 10774 / NCTC 10582 / VPI-5482 / E50).